Consider the following 474-residue polypeptide: UDP-N-acetylmuramate--L-alanine ligase (474 aa).

112–118 (GTHGKTT) contacts ATP.

Belongs to the MurCDEF family.

Its subcellular location is the cytoplasm. The catalysed reaction is UDP-N-acetyl-alpha-D-muramate + L-alanine + ATP = UDP-N-acetyl-alpha-D-muramoyl-L-alanine + ADP + phosphate + H(+). The protein operates within cell wall biogenesis; peptidoglycan biosynthesis. In terms of biological role, cell wall formation. This is UDP-N-acetylmuramate--L-alanine ligase from Cupriavidus taiwanensis (strain DSM 17343 / BCRC 17206 / CCUG 44338 / CIP 107171 / LMG 19424 / R1) (Ralstonia taiwanensis (strain LMG 19424)).